Reading from the N-terminus, the 299-residue chain is MKNTVIRGTAASNQIRVFVANTTEMVAKAQELQMATPVAIAALGRTLTATSMMGLMSKSEKEKITVNINGGGPLGPIVVVGNSKGIVKGYVSHPHVEGSNLYPGKLDVGSAVGTDGTITVVKDLGLKEPYIGTYPLSTGEIAEDFAAYFAFSEQQPSGIALGVLVDVDYTIKAAGGYIIQVLPNIEEETLTKLESKLSTLEPITSIIDRIQDPEEILNHILGEFEPVILETYDVDFVCDCSEERLEQVLISIGEKELTEIIEEDKQAELVCHFCNKKYHFDEEHLNKLRSEILNKNNNI.

Intrachain disulfides connect cysteine 238–cysteine 240 and cysteine 271–cysteine 274.

The protein belongs to the HSP33 family. In terms of processing, under oxidizing conditions two disulfide bonds are formed involving the reactive cysteines. Under reducing conditions zinc is bound to the reactive cysteines and the protein is inactive.

The protein localises to the cytoplasm. Redox regulated molecular chaperone. Protects both thermally unfolding and oxidatively damaged proteins from irreversible aggregation. Plays an important role in the bacterial defense system toward oxidative stress. The protein is 33 kDa chaperonin of Alkaliphilus oremlandii (strain OhILAs) (Clostridium oremlandii (strain OhILAs)).